Consider the following 398-residue polypeptide: Cytochrome b561 and DOMON domain-containing protein At3g61750 (398 aa).

A signal peptide spans 1–23 (MKTLVGFYILCFLIGQDLPFLAA). The DOMON domain maps to 64–177 (NTFVLRYSEN…PRRAVILAFS (114 aa)). Residues 184-377 (LGRLTKHDDK…LEIFRIRGTI (194 aa)) form the Cytochrome b561 domain. His220 contributes to the heme b binding site. 2 consecutive transmembrane segments (helical) span residues 222–242 (VMAI…ARYL) and 252–272 (LHIG…ILGI). Heme b-binding residues include His253 and His285. A run of 3 helical transmembrane segments spans residues 287–307 (GIGI…FARP), 320–340 (YHHW…VLGI), and 351–371 (KIGY…LEIF). Heme b is bound at residue His321.

Heme b serves as cofactor.

The protein localises to the membrane. Functionally, may act as a catecholamine-responsive trans-membrane electron transporter. In Arabidopsis thaliana (Mouse-ear cress), this protein is Cytochrome b561 and DOMON domain-containing protein At3g61750.